The sequence spans 203 residues: Holliday junction branch migration complex subunit RuvA (203 aa).

The segment at 1-63 (MIGKLSGKID…EEHIHLYGFL (63 aa)) is domain I. The interval 64–142 (TLEEKNFFNL…KISSGSVIIK (79 aa)) is domain II. The segment at 143-149 (DSLNIKN) is flexible linker. The tract at residues 150 to 203 (ITPVASNEVIKALVNLGFSRFEAQNAVQGIIIQNPEISIDELIKTALKNRNAGL) is domain III.

The protein belongs to the RuvA family. In terms of assembly, homotetramer. Forms an RuvA(8)-RuvB(12)-Holliday junction (HJ) complex. HJ DNA is sandwiched between 2 RuvA tetramers; dsDNA enters through RuvA and exits via RuvB. An RuvB hexamer assembles on each DNA strand where it exits the tetramer. Each RuvB hexamer is contacted by two RuvA subunits (via domain III) on 2 adjacent RuvB subunits; this complex drives branch migration. In the full resolvosome a probable DNA-RuvA(4)-RuvB(12)-RuvC(2) complex forms which resolves the HJ.

The protein resides in the cytoplasm. Its function is as follows. The RuvA-RuvB-RuvC complex processes Holliday junction (HJ) DNA during genetic recombination and DNA repair, while the RuvA-RuvB complex plays an important role in the rescue of blocked DNA replication forks via replication fork reversal (RFR). RuvA specifically binds to HJ cruciform DNA, conferring on it an open structure. The RuvB hexamer acts as an ATP-dependent pump, pulling dsDNA into and through the RuvAB complex. HJ branch migration allows RuvC to scan DNA until it finds its consensus sequence, where it cleaves and resolves the cruciform DNA. This Rickettsia felis (strain ATCC VR-1525 / URRWXCal2) (Rickettsia azadi) protein is Holliday junction branch migration complex subunit RuvA.